Consider the following 612-residue polypeptide: RNA polymerase sigma factor RpoD (612 aa).

The segment covering 191–206 (QQNNEEDEENNQEDHE) has biased composition (acidic residues). Residues 191–210 (QQNNEEDEENNQEDHEDDHS) are disordered. Residues 378 to 448 (MVEANLRLVI…TRSIADQART (71 aa)) form a sigma-70 factor domain-2 region. Residues 402-405 (DLIQ) carry the Interaction with polymerase core subunit RpoC motif. A sigma-70 factor domain-3 region spans residues 457-533 (ETINKLNRIS…DTTLELPLDS (77 aa)). The interval 546–599 (VLSGLTAREAKVLRMRFGIDMNTDHTLEEVGKQFDVTRERIRQIEAKALRKLRH) is sigma-70 factor domain-4. Residues 572 to 591 (LEEVGKQFDVTRERIRQIEA) constitute a DNA-binding region (H-T-H motif).

It belongs to the sigma-70 factor family. RpoD/SigA subfamily. Interacts transiently with the RNA polymerase catalytic core.

The protein resides in the cytoplasm. In terms of biological role, sigma factors are initiation factors that promote the attachment of RNA polymerase to specific initiation sites and are then released. This sigma factor is the primary sigma factor during exponential growth. The sequence is that of RNA polymerase sigma factor RpoD from Buchnera aphidicola subsp. Acyrthosiphon pisum (strain APS) (Acyrthosiphon pisum symbiotic bacterium).